Here is a 447-residue protein sequence, read N- to C-terminus: Glutamine synthetase (447 aa).

One can recognise a GS beta-grasp domain in the interval Arg20 to Gly105. The 336-residue stretch at Pro112 to Leu447 folds into the GS catalytic domain. The Mg(2+) site is built by Glu135 and Glu137. Glu187 is a binding site for ATP. Glu192 and Glu199 together coordinate Mg(2+). Residues Asn243–Gly244 and Gly244 each bind L-glutamate. His248 serves as a coordination point for Mg(2+). Ser252 contacts ATP. L-glutamate-binding residues include Arg301, Glu307, and Arg319. Residues Arg319 and Arg324 each contribute to the ATP site. Glu336 lines the Mg(2+) pocket. An L-glutamate-binding site is contributed by Arg338.

It belongs to the glutamine synthetase family. As to quaternary structure, homohexamer. Interacts and forms stable complexes with the regulatory protein GlnK1. The cofactor is Mg(2+).

It localises to the cytoplasm. The enzyme catalyses L-glutamate + NH4(+) + ATP = L-glutamine + ADP + phosphate + H(+). With respect to regulation, directly stimulated by the effector molecule 2-oxoglutarate. Inhibited by GlnK1. 2-oxoglutarate antagonizes the inhibitory effects of GlnK1, but does not prevent GlnK1/GlnA1 complex formation. Functionally, probably involved in nitrogen metabolism via ammonium assimilation. Catalyzes the ATP-dependent biosynthesis of glutamine from glutamate and ammonia. The sequence is that of Glutamine synthetase from Methanosarcina mazei (strain ATCC BAA-159 / DSM 3647 / Goe1 / Go1 / JCM 11833 / OCM 88) (Methanosarcina frisia).